A 492-amino-acid chain; its full sequence is Ammonium transporter MEP1 (492 aa).

Residues 1–18 (MESRTTGPLTTETYDGPT) lie on the Extracellular side of the membrane. A helical membrane pass occupies residues 19 to 39 (VAFMILGAALVFFMVPGLGFL). The Cytoplasmic segment spans residues 40–49 (YSGLARRKSA). The helical transmembrane segment at 50-70 (LALIWVVLMATLVGILQWYFW) threads the bilayer. The Extracellular segment spans residues 71–109 (GYSLAFSKSAPNNKFIGNLDSFGFRNVYGKKFDEDAYPE). A helical membrane pass occupies residues 110-130 (LAYATFQMMFSCVNLSIIAGA). Residues 131–140 (TAERGRLLPH) lie on the Cytoplasmic side of the membrane. The chain crosses the membrane as a helical span at residues 141 to 161 (MVFLFILATIGYCPVTYWIWS). Residues 162 to 174 (PGGWAYQWGVLDW) are Extracellular-facing. The chain crosses the membrane as a helical span at residues 175 to 195 (AGGGNIEILSAVSGFVYSWFL). Residues 196–210 (GKRNEKLLINFRPHN) lie on the Cytoplasmic side of the membrane. Residues 211–231 (VSLVTLGTSILWFGWLLFNSA) traverse the membrane as a helical segment. The Extracellular portion of the chain corresponds to 232–240 (SSLSPNLRS). A helical membrane pass occupies residues 241–261 (VYAFMNTCLSAITGGMTWCLL). Topologically, residues 262 to 268 (DYRSEKK) are cytoplasmic. Residues 269–289 (WSTVGLCSGIISGLVAATPSS) form a helical membrane-spanning segment. Residue Gly290 is a topological domain, extracellular. A helical membrane pass occupies residues 291–311 (CITLYGSLIQGIVAGVVCNFA). The Cytoplasmic portion of the chain corresponds to 312 to 331 (TKLKYYAKVDDAMDILAEHG). The helical transmembrane segment at 332-352 (VAGVIGLIFNALFGADWVIGM) threads the bilayer. Topologically, residues 353–373 (DGTTEHEGGWVTHNYKQMYKQ) are extracellular. A helical membrane pass occupies residues 374–394 (IAYIAASIGYTAAVTAIICFV). The Cytoplasmic portion of the chain corresponds to 395–492 (LGYIPGMRLR…PIHQEDPANR (98 aa)). 2 positions are modified to phosphoserine: Ser442 and Ser445. The segment at 455–492 (HLAAERSSSGTNSSSDGNGEMIQSEKILPIHQEDPANR) is disordered. Positions 461-473 (SSSGTNSSSDGNG) are enriched in low complexity.

Belongs to the ammonia transporter channel (TC 1.A.11.2) family.

It is found in the membrane. Its function is as follows. Transporter for ammonium (both charged and uncharged NH3 and NH4) to use as a nitrogen source. Can also transport methylamine. The affinity of MEP1 is about twenty times lower than that of MEP2. MEP3 has the lowest affinity. This is Ammonium transporter MEP1 (MEP1) from Saccharomyces cerevisiae (strain ATCC 204508 / S288c) (Baker's yeast).